A 320-amino-acid chain; its full sequence is Nodulation efficiency protein NfeD (320 aa).

Belongs to the ornithine cyclodeaminase/mu-crystallin family.

Seems to be involved in the nodulation efficiency of R.meliloti GR4 on alfalfa roots. This is Nodulation efficiency protein NfeD from Rhizobium meliloti (Ensifer meliloti).